Consider the following 1547-residue polypeptide: Mediator of RNA polymerase II transcription subunit 12 (1547 aa).

2 disordered regions span residues 1 to 63 (MTSR…RPHI) and 1356 to 1509 (PVIP…QQRD). Over residues 1357–1369 (VIPPLEPPQPPNP) the composition is skewed to pro residues. A compositionally biased stretch (polar residues) spans 1379–1390 (YQSPQMTSNTAA). Low complexity-rich tracts occupy residues 1398–1413 (QQQQ…QQTQ) and 1446–1468 (LSPL…RASQ). 2 stretches are compositionally biased toward polar residues: residues 1469–1480 (PSPIHSQRPTSV) and 1499–1509 (AHTSYVNQQRD).

The protein belongs to the Mediator complex subunit 12 family. In terms of assembly, component of the SRB8-11 complex, which itself associates with the Mediator complex.

Its subcellular location is the nucleus. Component of the SRB8-11 complex. The SRB8-11 complex is a regulatory module of the Mediator complex which is itself involved in regulation of basal and activated RNA polymerase II-dependent transcription. The SRB8-11 complex may be involved in the transcriptional repression of a subset of genes regulated by Mediator. It may inhibit the association of the Mediator complex with RNA polymerase II to form the holoenzyme complex. The chain is Mediator of RNA polymerase II transcription subunit 12 (SRB8) from Phaeosphaeria nodorum (strain SN15 / ATCC MYA-4574 / FGSC 10173) (Glume blotch fungus).